Here is a 411-residue protein sequence, read N- to C-terminus: Actin-like protein 9 (411 aa).

The span at 1–15 (MDVNGPKRWEPHRSL) shows a compositional bias: basic and acidic residues. Positions 1–23 (MDVNGPKRWEPHRSLDLNPRSTP) are disordered.

This sequence belongs to the actin family. In terms of assembly, interacts with ACTL7A.

It localises to the cytoplasmic vesicle. The protein resides in the secretory vesicle. Its subcellular location is the acrosome. The protein localises to the cytoplasm. It is found in the cytoskeleton. It localises to the perinuclear theca. In terms of biological role, testis-specic protein that plays an important role in fusion of proacrosomal vesicles and perinuclear theca formation. This chain is Actin-like protein 9 (Actl9), found in Rattus norvegicus (Rat).